Consider the following 192-residue polypeptide: Neurogenic differentiation factor 1 (192 aa).

The bHLH domain occupies 19 to 71 (VRRVKANGRERARMHGLNNALDMLREYIPITTQHQKLSKIETLRLARNYIDAL). The segment at 116 to 192 (PSQFDIFSDP…SHQNTFNYSP (77 aa)) is disordered. A compositionally biased stretch (low complexity) spans 139–163 (SSFSSSSPSSSCSPPQYYYSPTQPS).

As to expression, expressed in neuroblasts of the AB lineage. More specifically in precursors of the embryonic ventral cord motor neurons. Expressed to a lesser degree in the EMS lineage which generates mostly endoderm and mesoderm tissues.

It is found in the nucleus. In terms of biological role, acts as a transcriptional regulator whose activity is required for several aspects of motor neuron fate specification, including cell division patterns, proper spatiotemporal expression of fate-specific markers, and normal axonal morphology and pathfinding. Involved in regulating glial specification. This is Neurogenic differentiation factor 1 (cnd-1) from Caenorhabditis elegans.